The primary structure comprises 441 residues: Zinc finger and BTB domain-containing protein 8A (441 aa).

The BTB domain occupies 24-92 (CDCSILVEGK…VYSGKLSLTG (69 aa)). The disordered stretch occupies residues 135-248 (LSDKDTGSNG…HVSQSEEQVQ (114 aa)). 2 positions are modified to phosphoserine: serine 161 and serine 167. Glycyl lysine isopeptide (Lys-Gly) (interchain with G-Cter in SUMO2) cross-links involve residues lysine 178, lysine 182, and lysine 199. Basic and acidic residues-rich tracts occupy residues 198–208 (AKHEQRKDPIK) and 227–242 (GKGD…HVSQ). 2 consecutive C2H2-type zinc fingers follow at residues 282–304 (FKCP…LRCH) and 310–333 (YPCQ…RTIH). Lysine 437 participates in a covalent cross-link: Glycyl lysine isopeptide (Lys-Gly) (interchain with G-Cter in SUMO2).

The protein resides in the nucleus. Its function is as follows. May be involved in transcriptional regulation. The sequence is that of Zinc finger and BTB domain-containing protein 8A (Zbtb8a) from Rattus norvegicus (Rat).